The sequence spans 349 residues: Beta-hexosaminidase (349 aa).

Residues Asp-64, Arg-72, Arg-138, and 168–169 (KH) contribute to the substrate site. His-181 functions as the Proton donor/acceptor in the catalytic mechanism. The active-site Nucleophile is Asp-252.

It belongs to the glycosyl hydrolase 3 family. NagZ subfamily.

It is found in the cytoplasm. It catalyses the reaction Hydrolysis of terminal non-reducing N-acetyl-D-hexosamine residues in N-acetyl-beta-D-hexosaminides.. It functions in the pathway cell wall biogenesis; peptidoglycan recycling. Its function is as follows. Plays a role in peptidoglycan recycling by cleaving the terminal beta-1,4-linked N-acetylglucosamine (GlcNAc) from peptide-linked peptidoglycan fragments, giving rise to free GlcNAc, anhydro-N-acetylmuramic acid and anhydro-N-acetylmuramic acid-linked peptides. This chain is Beta-hexosaminidase, found in Methylobacillus flagellatus (strain ATCC 51484 / DSM 6875 / VKM B-1610 / KT).